The primary structure comprises 154 residues: Myoglobin (154 aa).

Residues 2 to 148 (GLSDGEWQLV…FRKDIAAKYK (147 aa)) enclose the Globin domain. S4 is subject to Phosphoserine. H65 is a binding site for nitrite. H65 is an O2 binding site. T68 bears the Phosphothreonine mark. H94 contributes to the heme b binding site.

Belongs to the globin family. As to quaternary structure, monomeric.

The protein resides in the cytoplasm. Its subcellular location is the sarcoplasm. The enzyme catalyses Fe(III)-heme b-[protein] + nitric oxide + H2O = Fe(II)-heme b-[protein] + nitrite + 2 H(+). It carries out the reaction H2O2 + AH2 = A + 2 H2O. Monomeric heme protein which primary function is to store oxygen and facilitate its diffusion within muscle tissues. Reversibly binds oxygen through a pentacoordinated heme iron and enables its timely and efficient release as needed during periods of heightened demand. Depending on the oxidative conditions of tissues and cells, and in addition to its ability to bind oxygen, it also has a nitrite reductase activity whereby it regulates the production of bioactive nitric oxide. Under stress conditions, like hypoxia and anoxia, it also protects cells against reactive oxygen species thanks to its pseudoperoxidase activity. In Delphinus delphis (Short-beaked common dolphin), this protein is Myoglobin (MB).